Consider the following 323-residue polypeptide: MDHAITPEPHLVPGYTGHCAQNRDRVGRTYGRQTHKLLIDPCIYHAPELIVAPIHAKRGLKDYPTEQELKILRTREGLVDSVYRHPILPGYAGFVPNKVSQIGKRYVAAASAGVARHETLMELYRCENRTLRHRDLLESGNGLFDRKINERLLPQTYYRSPLILVTGVSKGIKDETCPPKTEKLCYSKFTSPHFLEDEDADKFIINGYSGHIPMSVTRFGESNKVLTNRALCSFSDYMYKRKRDTWCCGQDLSRPSITCPPVGHFVVYHEDSGMVPNYAGHVPGETYKFGRTYAKTTYDAKRWLEVHKNLTVLPEVANLDYAY.

This sequence belongs to the CIMIP2 family.

It is found in the cytoplasm. It localises to the cytoskeleton. The protein localises to the cilium axoneme. Probable microtubule inner protein (MIP) part of the dynein-decorated doublet microtubules (DMTs) in cilium axoneme. This is CIMIP2 protein CG18335 from Drosophila melanogaster (Fruit fly).